We begin with the raw amino-acid sequence, 403 residues long: MPREIAMYNLPDAHGHFGPYGGTFVAETLSHALDELRDAYARYQHDPEFIKEYEYELKHFVGRPSPIYHARRLTEHCGGAQIYLKREDLNHTGAHKVNNVIGQALLARRMGKPRVIAETGAGQHGVATATIAARYGMECVVYMGSEDVRRQAANVYRMKLLGATVVPVESGSRTLKDALNEAMRDWVTNVADTFYIIGTVAGPHPYPMMVRDFQAVIGEECKVQMPELAGRQPDAVIACVGGGSNAMGIFYPYIDHASVQLIGVEAAGEGLESGRHAASLTGGSPGVLHGNRTYLLQDEDGQIIETHSISAGLDYPGVGPEHAWLKDAGRAQYVGITDKEALQAFHDLCRMEGIIPALESSHALAYACKLAPTLPKDKILLVNLSGRGDKDMHTVAELSGIDL.

At Lys96 the chain carries N6-(pyridoxal phosphate)lysine.

This sequence belongs to the TrpB family. Tetramer of two alpha and two beta chains. The cofactor is pyridoxal 5'-phosphate.

It catalyses the reaction (1S,2R)-1-C-(indol-3-yl)glycerol 3-phosphate + L-serine = D-glyceraldehyde 3-phosphate + L-tryptophan + H2O. It functions in the pathway amino-acid biosynthesis; L-tryptophan biosynthesis; L-tryptophan from chorismate: step 5/5. The beta subunit is responsible for the synthesis of L-tryptophan from indole and L-serine. This chain is Tryptophan synthase beta chain, found in Ralstonia nicotianae (strain ATCC BAA-1114 / GMI1000) (Ralstonia solanacearum).